The following is a 325-amino-acid chain: Probable tRNA pseudouridine synthase B (325 aa).

Catalysis depends on aspartate 69, which acts as the Nucleophile. One can recognise a PUA domain in the interval 236-311 (LPKIVIKDSA…IAADIQRVMM (76 aa)).

Belongs to the pseudouridine synthase TruB family. Type 2 subfamily.

The enzyme catalyses uridine(55) in tRNA = pseudouridine(55) in tRNA. Its function is as follows. Could be responsible for synthesis of pseudouridine from uracil-55 in the psi GC loop of transfer RNAs. In Archaeoglobus fulgidus (strain ATCC 49558 / DSM 4304 / JCM 9628 / NBRC 100126 / VC-16), this protein is Probable tRNA pseudouridine synthase B.